A 228-amino-acid polypeptide reads, in one-letter code: Urease accessory protein UreG (228 aa).

34–41 (GPVGSGKT) contributes to the GTP binding site.

The protein belongs to the SIMIBI class G3E GTPase family. UreG subfamily. In terms of assembly, homodimer. UreD, UreF and UreG form a complex that acts as a GTP-hydrolysis-dependent molecular chaperone, activating the urease apoprotein by helping to assemble the nickel containing metallocenter of UreC. The UreE protein probably delivers the nickel.

Its subcellular location is the cytoplasm. Functionally, facilitates the functional incorporation of the urease nickel metallocenter. This process requires GTP hydrolysis, probably effectuated by UreG. This is Urease accessory protein UreG from Rhodococcus opacus (strain B4).